Consider the following 957-residue polypeptide: Glycine dehydrogenase (decarboxylating) (957 aa).

Lys-708 is modified (N6-(pyridoxal phosphate)lysine).

Belongs to the GcvP family. The glycine cleavage system is composed of four proteins: P, T, L and H. Requires pyridoxal 5'-phosphate as cofactor.

The enzyme catalyses N(6)-[(R)-lipoyl]-L-lysyl-[glycine-cleavage complex H protein] + glycine + H(+) = N(6)-[(R)-S(8)-aminomethyldihydrolipoyl]-L-lysyl-[glycine-cleavage complex H protein] + CO2. Its function is as follows. The glycine cleavage system catalyzes the degradation of glycine. The P protein binds the alpha-amino group of glycine through its pyridoxal phosphate cofactor; CO(2) is released and the remaining methylamine moiety is then transferred to the lipoamide cofactor of the H protein. The protein is Glycine dehydrogenase (decarboxylating) of Shigella flexneri.